The primary structure comprises 659 residues: Protein FAM161A (659 aa).

The disordered stretch occupies residues 34 to 59; the sequence is LGERQQQRTASVSPQRLPRTSMGTPA. A coiled-coil region spans residues 96–120; that stretch reads YVQVEKLKKAHLQNMEQLEKMYDKK. Disordered stretches follow at residues 165 to 190 and 401 to 428; these read GSVS…EHSV and LAPG…PKIS. The span at 408 to 426 shows a compositional bias: basic residues; it reads GTKKGKCYKPKEKQKHKPK. Residues 531 to 557 are a coiled coil; that stretch reads AIRKREKQRTKDYMKELEAMEQRVLNK. The segment at 594-659 is disordered; that stretch reads NGQSASVDEH…TDEDHSMEEI (66 aa). The span at 600–616 shows a compositional bias: basic and acidic residues; sequence VDEHVSVREENNPRAES. The span at 637–650 shows a compositional bias: acidic residues; that stretch reads PESEEAQEEDAYST.

Belongs to the FAM161 family.

It localises to the cytoplasm. The protein localises to the cytoskeleton. Its subcellular location is the cilium basal body. The protein resides in the cell projection. It is found in the cilium. It localises to the microtubule organizing center. The protein localises to the centrosome. Its subcellular location is the centriole. In terms of biological role, involved in ciliogenesis. This chain is Protein FAM161A (fam161a), found in Xenopus tropicalis (Western clawed frog).